The sequence spans 292 residues: 1D-myo-inositol 2-acetamido-2-deoxy-alpha-D-glucopyranoside deacetylase (292 aa).

Zn(2+) is bound by residues H11, D14, and H146.

Belongs to the MshB deacetylase family. Zn(2+) is required as a cofactor.

It catalyses the reaction 1D-myo-inositol 2-acetamido-2-deoxy-alpha-D-glucopyranoside + H2O = 1D-myo-inositol 2-amino-2-deoxy-alpha-D-glucopyranoside + acetate. Catalyzes the deacetylation of 1D-myo-inositol 2-acetamido-2-deoxy-alpha-D-glucopyranoside (GlcNAc-Ins) in the mycothiol biosynthesis pathway. In Acidothermus cellulolyticus (strain ATCC 43068 / DSM 8971 / 11B), this protein is 1D-myo-inositol 2-acetamido-2-deoxy-alpha-D-glucopyranoside deacetylase.